The sequence spans 316 residues: Pantothenate kinase (316 aa).

95–102 (GSVAVGKS) provides a ligand contact to ATP.

It belongs to the prokaryotic pantothenate kinase family.

It is found in the cytoplasm. It catalyses the reaction (R)-pantothenate + ATP = (R)-4'-phosphopantothenate + ADP + H(+). It functions in the pathway cofactor biosynthesis; coenzyme A biosynthesis; CoA from (R)-pantothenate: step 1/5. The chain is Pantothenate kinase from Shigella boydii serotype 18 (strain CDC 3083-94 / BS512).